The chain runs to 421 residues: Histidine--tRNA ligase (421 aa).

It belongs to the class-II aminoacyl-tRNA synthetase family. Homodimer.

Its subcellular location is the cytoplasm. The enzyme catalyses tRNA(His) + L-histidine + ATP = L-histidyl-tRNA(His) + AMP + diphosphate + H(+). The chain is Histidine--tRNA ligase from Caldicellulosiruptor bescii (strain ATCC BAA-1888 / DSM 6725 / KCTC 15123 / Z-1320) (Anaerocellum thermophilum).